The sequence spans 316 residues: Pseudouridine-5'-phosphate glycosidase (316 aa).

E31 (proton donor) is an active-site residue. Residues K92 and V112 each coordinate substrate. D144 lines the Mn(2+) pocket. 146–148 serves as a coordination point for substrate; the sequence is SAD. The active-site Nucleophile is K165.

This sequence belongs to the pseudouridine-5'-phosphate glycosidase family. As to quaternary structure, homotrimer. It depends on Mn(2+) as a cofactor.

The enzyme catalyses D-ribose 5-phosphate + uracil = psi-UMP + H2O. Its function is as follows. Catalyzes the reversible cleavage of pseudouridine 5'-phosphate (PsiMP) to ribose 5-phosphate and uracil. Functions biologically in the cleavage direction, as part of a pseudouridine degradation pathway. Part of an operon that could be involved in the biosynthesis of the blue pigment indigoidine, which is implicated in pathogenicity and protection from oxidative stress. The protein is Pseudouridine-5'-phosphate glycosidase of Dickeya dadantii (strain 3937) (Erwinia chrysanthemi (strain 3937)).